Consider the following 385-residue polypeptide: Benzoate O-methyltransferase (385 aa).

Position 18 (tyrosine 18) interacts with S-adenosyl-L-homocysteine. Glutamine 25 contacts benzoate. Cysteine 59, asparagine 64, aspartate 106, leucine 107, serine 145, and tyrosine 146 together coordinate S-adenosyl-L-homocysteine. Tryptophan 167 is a binding site for benzoate. Asparagine 184, glutamate 270, phenylalanine 272, and asparagine 273 together coordinate Mg(2+).

It belongs to the methyltransferase superfamily. Type-7 methyltransferase family. SABATH subfamily. The cofactor is Mg(2+).

It carries out the reaction benzoate + S-adenosyl-L-methionine = methyl benzoate + S-adenosyl-L-homocysteine. In terms of biological role, methyltransferase involved in the biosynthesis of methyl benzoate in response to stresses. Utilizes exclusively benzoic acid (BA) as substrate. This Zea mays (Maize) protein is Benzoate O-methyltransferase (OMT8).